The sequence spans 291 residues: 4-diphosphocytidyl-2-C-methyl-D-erythritol kinase (291 aa).

Lys-10 is a catalytic residue. 99–109 contacts ATP; that stretch reads PMGGGLGGGSS. The active site involves Asp-141.

It belongs to the GHMP kinase family. IspE subfamily. Homodimer.

The catalysed reaction is 4-CDP-2-C-methyl-D-erythritol + ATP = 4-CDP-2-C-methyl-D-erythritol 2-phosphate + ADP + H(+). It functions in the pathway isoprenoid biosynthesis; isopentenyl diphosphate biosynthesis via DXP pathway; isopentenyl diphosphate from 1-deoxy-D-xylulose 5-phosphate: step 3/6. Functionally, catalyzes the phosphorylation of the position 2 hydroxy group of 4-diphosphocytidyl-2C-methyl-D-erythritol. The polypeptide is 4-diphosphocytidyl-2-C-methyl-D-erythritol kinase (Proteus mirabilis (strain HI4320)).